The primary structure comprises 271 residues: Multivesicular body subunit 12A (271 aa).

The region spanning 7 to 149 is the MABP domain; it reads SAPLAGLVWS…GFAIWCKKSK (143 aa). Threonine 128 bears the Phosphothreonine mark. Residues 149–192 are disordered; it reads KAPRPVPKPRTLSQDMRGLSLDPPKEPSKGSHPERTLSRLGSRA. The SH3-binding signature appears at 153–158; it reads PVPKPR. A phosphoserine mark is found at serine 161 and serine 168. Over residues 171 to 185 the composition is skewed to basic and acidic residues; sequence PPKEPSKGSHPERTL. Residues 190 to 271 form an interaction with TSG101, VPS37B and VPS28 region; it reads SRASTLRRTD…AAARLPPSVS (82 aa). Serine 193 and serine 200 each carry phosphoserine. At tyrosine 202 the chain carries Phosphotyrosine. Phosphoserine is present on serine 205. Positions 213-263 constitute a UMA domain; that stretch reads MDGVPFTLHPRFEGKSCGPLNLSAFGDLTIKSLADIEKEYNYGFVVEKTAA.

It belongs to the MVB12 family. As to quaternary structure, component of the ESCRT-I complex (endosomal sorting complex required for transport I) which consists of TSG101, VPS28, a VPS37 protein (VPS37A to -D) and MVB12A or MVB12B in a 1:1:1:1 stoichiometry. Interacts with CD2AP and CIN85/SH3KBP1. Interacts with CD2AP (via one of the SH3 domains). Interacts with TSG101; the association appears to be mediated by the TSG101-VPS37 binary subcomplex. Interacts with VPS28. Interacts with VPS37B; the association appears to be mediated by the TSG101-VPS37 binary subcomplex. Interacts with VPS37C; the association appears to be mediated by the TSG101-VPS37 binary subcomplex. Interacts with VPS37D; the association appears to be mediated by the TSG101-VPS37 binary subcomplex. Interacts with CEP55. Phosphorylated on Tyr-202 upon EGF stimulation. Phosphorylation is required for interaction with CD2AP and CIN85/SH3KBP1.

Its subcellular location is the cytoplasm. The protein localises to the cytoskeleton. The protein resides in the nucleus. It localises to the endosome. It is found in the microtubule organizing center. Its subcellular location is the centrosome. The protein localises to the late endosome membrane. In terms of biological role, component of the ESCRT-I complex, a regulator of vesicular trafficking process. Required for the sorting of endocytic ubiquitinated cargos into multivesicular bodies. May be involved in the ligand-mediated internalization and down-regulation of EGF receptor. The sequence is that of Multivesicular body subunit 12A (Mvb12a) from Mus musculus (Mouse).